A 524-amino-acid polypeptide reads, in one-letter code: Glutamyl-tRNA(Gln) amidotransferase subunit A (524 aa).

Active-site charge relay system residues include K109 and S184. S208 (acyl-ester intermediate) is an active-site residue.

The protein belongs to the amidase family. GatA subfamily. As to quaternary structure, heterotrimer of A, B and C subunits.

It carries out the reaction L-glutamyl-tRNA(Gln) + L-glutamine + ATP + H2O = L-glutaminyl-tRNA(Gln) + L-glutamate + ADP + phosphate + H(+). Its function is as follows. Allows the formation of correctly charged Gln-tRNA(Gln) through the transamidation of misacylated Glu-tRNA(Gln) in organisms which lack glutaminyl-tRNA synthetase. The reaction takes place in the presence of glutamine and ATP through an activated gamma-phospho-Glu-tRNA(Gln). The protein is Glutamyl-tRNA(Gln) amidotransferase subunit A of Tropheryma whipplei (strain Twist) (Whipple's bacillus).